A 1200-amino-acid polypeptide reads, in one-letter code: uncharacterized protein (1200 aa).

5 disordered regions span residues 282-302, 323-372, 392-491, 510-568, and 1056-1200; these read SQES…GCTS, LSEA…PQGS, SQEP…KASL, RAKS…RIGA, and SCPE…LASL. Residues 420–435 are compositionally biased toward low complexity; it reads ASSPRLSPASPAAAAS. Over residues 437–448 the composition is skewed to basic and acidic residues; it reads TKIEVKTKERNG. Positions 518–527 are enriched in polar residues; sequence GTTQTKTSGP. A compositionally biased stretch (basic and acidic residues) spans 1137-1153; it reads EDGKGSHKLPDPAREHL. A compositionally biased stretch (low complexity) spans 1160 to 1171; that stretch reads RQQPPRQSQVPR. Positions 1175 to 1200 are enriched in polar residues; the sequence is GSFSSEGTDSQTSLEDSPQTSPLASL.

This is an uncharacterized protein from Homo sapiens (Human).